Consider the following 76-residue polypeptide: Exodeoxyribonuclease 7 small subunit (76 aa).

It belongs to the XseB family. As to quaternary structure, heterooligomer composed of large and small subunits.

The protein localises to the cytoplasm. The enzyme catalyses Exonucleolytic cleavage in either 5'- to 3'- or 3'- to 5'-direction to yield nucleoside 5'-phosphates.. Functionally, bidirectionally degrades single-stranded DNA into large acid-insoluble oligonucleotides, which are then degraded further into small acid-soluble oligonucleotides. This chain is Exodeoxyribonuclease 7 small subunit, found in Methylococcus capsulatus (strain ATCC 33009 / NCIMB 11132 / Bath).